Here is a 226-residue protein sequence, read N- to C-terminus: ATP-dependent dethiobiotin synthetase BioD (226 aa).

12-17 (GIGKTV) is an ATP binding site. Threonine 16 serves as a coordination point for Mg(2+). The active site involves lysine 37. Threonine 41 serves as a coordination point for substrate. ATP is bound by residues aspartate 49, 108–111 (EGAG), and 197–199 (PAG). Residues aspartate 49 and glutamate 108 each coordinate Mg(2+).

This sequence belongs to the dethiobiotin synthetase family. In terms of assembly, homodimer. Mg(2+) is required as a cofactor.

The protein resides in the cytoplasm. It catalyses the reaction (7R,8S)-7,8-diammoniononanoate + CO2 + ATP = (4R,5S)-dethiobiotin + ADP + phosphate + 3 H(+). The protein operates within cofactor biosynthesis; biotin biosynthesis; biotin from 7,8-diaminononanoate: step 1/2. Catalyzes a mechanistically unusual reaction, the ATP-dependent insertion of CO2 between the N7 and N8 nitrogen atoms of 7,8-diaminopelargonic acid (DAPA, also called 7,8-diammoniononanoate) to form a ureido ring. The chain is ATP-dependent dethiobiotin synthetase BioD from Mycolicibacterium vanbaalenii (strain DSM 7251 / JCM 13017 / BCRC 16820 / KCTC 9966 / NRRL B-24157 / PYR-1) (Mycobacterium vanbaalenii).